A 423-amino-acid chain; its full sequence is 5-hydroxytryptamine receptor 1A (423 aa).

The disordered stretch occupies residues 1–20 (MEGLSPGQGNNTTSSEGPFG). Topologically, residues 1–38 (MEGLSPGQGNNTTSSEGPFGTRGNATGISDVTFSYQVI) are extracellular. A compositionally biased stretch (polar residues) spans 7-16 (GQGNNTTSSE). N-linked (GlcNAc...) asparagine glycans are attached at residues Asn-10, Asn-11, and Asn-24. The chain crosses the membrane as a helical span at residues 39-59 (TSLLLGTLIFCAVLGNACVVA). Topologically, residues 60–73 (AIALERSLQNVANY) are cytoplasmic. Residues 74 to 98 (LIGSLAVTDLMVSVLVLPMAALYQV) form a helical membrane-spanning segment. Residues 99 to 107 (LNKWTLGQV) lie on the Extracellular side of the membrane. A helical membrane pass occupies residues 108–132 (TCDLFIALDVLCCTSSILHLCAIAL). Cys-109 and Cys-187 are disulfide-bonded. Residues Asp-116 and Cys-120 each coordinate serotonin. The DRY motif; important for ligand-induced conformation changes motif lies at 133-135 (DRY). Residues 133 to 152 (DRYWAITDPIDYVNKRTPRR) are Cytoplasmic-facing. The helical transmembrane segment at 153–174 (AAALISLTWLIGFLISIPPMLG) threads the bilayer. The Extracellular segment spans residues 175–193 (WRTPEDRSDPDACTISKDH). The chain crosses the membrane as a helical span at residues 194-216 (GYTIYSTFGAFYIPLLLMLVLYG). Topologically, residues 217 to 346 (RIFRAARFRI…LARERKTVKT (130 aa)) are cytoplasmic. The disordered stretch occupies residues 235-277 (RKGADARSGVSPAPQPRKSVNGEPGGREWRQGPGSKAGGPLCT). Residues Lys-345, Thr-346, and Gly-352 each contribute to the 1D-myo-inositol 4-phosphate site. A helical transmembrane segment spans residues 347–370 (LGIIMGTFILCWLPFFIVALVLPF). Residues 371–378 (CESSCHMP) are Extracellular-facing. A helical transmembrane segment spans residues 379 to 403 (TLLGAIINWLGYSNSLLNPVIYAYF). The NPxxY motif; important for ligand-induced conformation changes and signaling motif lies at 396 to 400 (NPVIY). Residues Phe-403, Asn-404, and Lys-405 each contribute to the 1D-myo-inositol 4-phosphate site. The Cytoplasmic portion of the chain corresponds to 404-423 (NKDFQNAFKKIVRCKFCRRR).

Belongs to the G-protein coupled receptor 1 family. 5-hydroxytryptamine receptor subfamily. HTR1A sub-subfamily. Heterodimer; heterodimerizes with GPER1. Interacts with YIF1B. Interacts with GPR39 and GALR1.

It is found in the cell membrane. It localises to the cell projection. The protein resides in the dendrite. With respect to regulation, G-protein coupled receptor activity is regulated by lipids: phosphatidylinositol 4-phosphate increases HTR1A-mediated activity. Its function is as follows. G-protein coupled receptor for 5-hydroxytryptamine (serotonin). Also functions as a receptor for various drugs and psychoactive substances. Ligand binding causes a conformation change that triggers signaling via guanine nucleotide-binding proteins (G proteins) and modulates the activity of downstream effectors, such as adenylate cyclase. HTR1A is coupled to G(i)/G(o) G alpha proteins and mediates inhibitory neurotransmission: signaling inhibits adenylate cyclase activity and activates a phosphatidylinositol-calcium second messenger system that regulates the release of Ca(2+) ions from intracellular stores. Beta-arrestin family members regulate signaling by mediating both receptor desensitization and resensitization processes. The polypeptide is 5-hydroxytryptamine receptor 1A (HTR1A) (Vulpes vulpes (Red fox)).